A 480-amino-acid polypeptide reads, in one-letter code: Protein nucleotidyltransferase YdiU (480 aa).

Gly-86, Gly-88, Arg-89, Lys-109, Asp-121, Gly-122, Arg-172, and Arg-179 together coordinate ATP. The Proton acceptor role is filled by Asp-248. Mg(2+) contacts are provided by Asn-249 and Asp-258. Asp-258 is a binding site for ATP.

This sequence belongs to the SELO family. The cofactor is Mg(2+). It depends on Mn(2+) as a cofactor.

It catalyses the reaction L-seryl-[protein] + ATP = 3-O-(5'-adenylyl)-L-seryl-[protein] + diphosphate. The enzyme catalyses L-threonyl-[protein] + ATP = 3-O-(5'-adenylyl)-L-threonyl-[protein] + diphosphate. The catalysed reaction is L-tyrosyl-[protein] + ATP = O-(5'-adenylyl)-L-tyrosyl-[protein] + diphosphate. It carries out the reaction L-histidyl-[protein] + UTP = N(tele)-(5'-uridylyl)-L-histidyl-[protein] + diphosphate. It catalyses the reaction L-seryl-[protein] + UTP = O-(5'-uridylyl)-L-seryl-[protein] + diphosphate. The enzyme catalyses L-tyrosyl-[protein] + UTP = O-(5'-uridylyl)-L-tyrosyl-[protein] + diphosphate. Its function is as follows. Nucleotidyltransferase involved in the post-translational modification of proteins. It can catalyze the addition of adenosine monophosphate (AMP) or uridine monophosphate (UMP) to a protein, resulting in modifications known as AMPylation and UMPylation. This is Protein nucleotidyltransferase YdiU from Salmonella paratyphi A (strain ATCC 9150 / SARB42).